Consider the following 374-residue polypeptide: 4-galactosyl-N-acetylglucosaminide 3-alpha-L-fucosyltransferase FUT5 (374 aa).

Residues 1 to 15 (MDLLGAAKPQWPWRR) lie on the Cytoplasmic side of the membrane. The helical; Signal-anchor for type II membrane protein transmembrane segment at 16–34 (CLAGLLFQLLVAVCFFSYL) threads the bilayer. Residues 35–374 (RVSRDDATGS…TVRSIAAWFN (340 aa)) lie on the Lumenal side of the membrane. 4 N-linked (GlcNAc...) asparagine glycosylation sites follow: Asn-60, Asn-105, Asn-167, and Asn-198.

The protein belongs to the glycosyltransferase 10 family.

The protein localises to the golgi apparatus. The protein resides in the golgi stack membrane. The enzyme catalyses a beta-D-galactosyl-(1-&gt;3)-N-acetyl-beta-D-glucosaminyl derivative + GDP-beta-L-fucose = a beta-D-galactosyl-(1-&gt;3)-[alpha-L-fucosyl-(1-&gt;4)]-N-acetyl-beta-D-glucosaminyl derivative + GDP + H(+). The catalysed reaction is an N-acetyl-alpha-neuraminyl-(2-&gt;3)-beta-D-galactosyl-(1-&gt;4)-N-acetyl-beta-D-glucosaminyl derivative + GDP-beta-L-fucose = an alpha-Neu5Ac-(2-&gt;3)-beta-D-Gal-(1-&gt;4)-[alpha-L-Fuc-(1-&gt;3)]-beta-D-GlcNAc derivative + GDP + H(+). It carries out the reaction an alpha-Neu5Ac-(2-&gt;3)-beta-D-Gal-(1-&gt;4)-beta-D-GlcNAc-(1-&gt;3)-beta-D-Gal-(1-&gt;4)-[alpha-L-Fuc-(1-&gt;3)]-beta-D-GlcNAc derivative + GDP-beta-L-fucose = an alpha-Neu5Ac-(2-&gt;3)-beta-D-Gal-(1-&gt;4)-[alpha-L-Fuc-(1-&gt;3)]-beta-D-GlcNAc-(1-&gt;3)-beta-D-Gal-(1-&gt;4)-[alpha-L-Fuc-(1-&gt;3)]-beta-D-GlcNAc derivative + GDP + H(+). It catalyses the reaction a beta-D-galactosyl-(1-&gt;4)-N-acetyl-beta-D-glucosaminyl derivative + GDP-beta-L-fucose = a beta-D-galactosyl-(1-&gt;4)-[alpha-L-fucosyl-(1-&gt;3)]-N-acetyl-beta-D-glucosaminyl derivative + GDP + H(+). The enzyme catalyses a neolactoside nLc4Cer + GDP-beta-L-fucose = a neolactoside III(3)-alpha-Fuc-nLc4Cer + GDP + H(+). The catalysed reaction is a neolactoside nLc6Cer + GDP-beta-L-fucose = beta-D-galactosyl-(1-&gt;4)-N-acetyl-beta-D-glucosaminyl-(1-&gt;3)-beta-D-galactosyl-(1-&gt;4)-[alpha-L-fucosyl-(1-&gt;3)]-N-acetyl-beta-D-glucosaminyl-(1-&gt;3)-beta-D-galactosyl-(1-&gt;4)-beta-D-glucosyl-(1&lt;-&gt;1')-ceramide + GDP + H(+). It carries out the reaction a neolactoside nLc6Cer(d18:1(4E)) + GDP-beta-L-fucose = a neolactoside III(3)-alpha-Fuc-nLc6Cer(d18:1(4E)) + GDP + H(+). It catalyses the reaction a neolactoside nLc4Cer(d18:1(4E)) + GDP-beta-L-fucose = a neolactoside III(3)-alpha-Fuc-nLc4Cer(d18:1(4E)) + GDP + H(+). The enzyme catalyses a neolactoside VI(3)-alpha-NeuNAc-nLc6Cer + GDP-beta-L-fucose = a neolactoside VI(3)-alpha-NeuAc,III(3)-alphaFuc-nLc6Cer + GDP + H(+). The catalysed reaction is beta-D-galactosyl-(1-&gt;4)-N-acetyl-D-glucosamine + GDP-beta-L-fucose = beta-D-galactosyl-(1-&gt;4)-[alpha-L-fucosyl-(1-&gt;3)]-N-acetyl-D-glucosamine + GDP + H(+). It carries out the reaction N-acetyl-alpha-neuraminosyl-(2-&gt;3)-beta-D-galactosyl-(1-&gt;4)-N-acetyl-beta-D-glucosamine + GDP-beta-L-fucose = N-acetyl-alpha-neuraminosyl-(2-&gt;3)-beta-D-galactosyl-(1-&gt;4)-[alpha-L-fucosyl-(1-&gt;3)]-N-acetyl-beta-D-glucosamine + GDP + H(+). It catalyses the reaction alpha-L-Fuc-(1-&gt;2)-beta-D-Gal-(1-&gt;4)-D-GlcNAc + GDP-beta-L-fucose = alpha-L-Fuc-(1-&gt;2)-beta-D-Gal-(1-&gt;4)-[alpha-L-Fuc-(1-&gt;3)]-D-GlcNAc + GDP + H(+). The enzyme catalyses an alpha-Neu5Ac-(2-&gt;3)-beta-D-Gal-(1-&gt;3)-D-GlcNAc derivative + GDP-beta-L-fucose = an alpha-Neu5Ac-(2-&gt;3)-beta-D-Gal-(1-&gt;3)-[alpha-L-Fuc-(1-&gt;4)]-beta-D-GlcNAc derivative + GDP + H(+). It functions in the pathway protein modification; protein glycosylation. Its function is as follows. Catalyzes preferentially the transfer of L-fucose, from a guanosine diphosphate-beta-L-fucose, to the N-acetyl-beta-D-glucosamine (GlcNAc) of an N-acetyllactosamine unit (type 2 chain) of an oligosaccharide, or a glycoprotein- and a glycolipid-linked N-acetyllactosamine unit via an alpha (1,3) linkage and participates in the surface expression of VIM-2, Lewis X/SSEA-1 and sialyl Lewis X antigens. Preferentially transfers fucose to the GlcNAc of an internal N-acetyllactosamine unit of a poly-N-acetyllactosamine chain acceptor substrate. Also catalyzes to a lesser extend the transfer of L-fucose to the GlcNAc of a type 1 (beta-D-galactosyl-(1-&gt;3)-N-acetyl-beta-D-glucosaminyl) or H-type 1 (alpha-L-Fuc-(1-&gt;2)-beta-D-Gal-(1-&gt;3)-D-GlcNAc) chain oligosaccharide via an alpha (1,4) linkage. Preferentially catalyzes sialylated type 2 oligosaccharide acceptors over neutral type 2 or H type 2 (alpha-L-Fuc-(1-&gt;2)-beta-D-Gal-(1-&gt;4)-D-GlcNAc) oligosaccharide acceptors. Lactose-based structures are also acceptor substrates. This Hylobates lar (Lar gibbon) protein is 4-galactosyl-N-acetylglucosaminide 3-alpha-L-fucosyltransferase FUT5.